The chain runs to 31 residues: Photosystem I reaction center subunit XII (31 aa).

Residues 7–26 form a helical membrane-spanning segment; that stretch reads QIFIALLTALIPAFFALKLG.

This sequence belongs to the PsaM family.

It is found in the plastid. Its subcellular location is the chloroplast thylakoid membrane. This is Photosystem I reaction center subunit XII from Euglena granulata.